Here is a 170-residue protein sequence, read N- to C-terminus: Cytochrome b6-f complex subunit 4 (170 aa).

3 consecutive transmembrane segments (helical) span residues 46-66 (LLFMFPVVILGTIGVIVGLAV), 105-125 (LLGIALMSAIPVGLLFVPFIE), and 141-161 (TVFLIGTLVTLYLGIGATLPL).

Belongs to the cytochrome b family. PetD subfamily. In terms of assembly, the 4 large subunits of the cytochrome b6-f complex are cytochrome b6, subunit IV (17 kDa polypeptide, PetD), cytochrome f and the Rieske protein, while the 4 small subunits are PetG, PetL, PetM and PetN. The complex functions as a dimer.

Its subcellular location is the cellular thylakoid membrane. Component of the cytochrome b6-f complex, which mediates electron transfer between photosystem II (PSII) and photosystem I (PSI), cyclic electron flow around PSI, and state transitions. The chain is Cytochrome b6-f complex subunit 4 from Synechococcus sp. (strain JA-3-3Ab) (Cyanobacteria bacterium Yellowstone A-Prime).